A 56-amino-acid chain; its full sequence is Large ribosomal subunit protein uL30 (56 aa).

The protein belongs to the universal ribosomal protein uL30 family. As to quaternary structure, part of the 50S ribosomal subunit.

This chain is Large ribosomal subunit protein uL30, found in Oleidesulfovibrio alaskensis (strain ATCC BAA-1058 / DSM 17464 / G20) (Desulfovibrio alaskensis).